Reading from the N-terminus, the 212-residue chain is Ras-related protein Rab-17 (212 aa).

S29 carries the phosphoserine modification. 4 residues coordinate GTP: G31, K32, S33, and T50. Residues S33, T50, and D73 each coordinate Mg(2+). The short motif at 43 to 54 is the Switch 1 element; sequence DFKSILPTVGCA. A Switch 2 motif is present at residues 75–91; sequence AGQEKYHSVCHLYFRGA. GTP is bound by residues G76, N132, K133, D135, and A163. 2 S-geranylgeranyl cysteine lipidation sites follow: C209 and C210.

This sequence belongs to the small GTPase superfamily. Rab family. Requires Mg(2+) as cofactor. As to expression, expressed in melanocytes (at protein level).

Its subcellular location is the recycling endosome membrane. The protein localises to the melanosome. It is found in the cell projection. The protein resides in the dendrite. It carries out the reaction GTP + H2O = GDP + phosphate + H(+). With respect to regulation, regulated by guanine nucleotide exchange factors (GEFs) which promote the exchange of bound GDP for free GTP. Regulated by GTPase activating proteins (GAPs) which increase the GTP hydrolysis activity. Inhibited by GDP dissociation inhibitors (GDIs). Functionally, the small GTPases Rab are key regulators of intracellular membrane trafficking, from the formation of transport vesicles to their fusion with membranes. Rabs cycle between an inactive GDP-bound form and an active GTP-bound form that is able to recruit to membranes different set of downstream effectors directly responsible for vesicle formation, movement, tethering and fusion. RAB17 is involved in transcytosis, the directed movement of endocytosed material through the cell and its exocytosis from the plasma membrane at the opposite side. Mainly observed in epithelial cells, transcytosis mediates for instance, the transcellular transport of immunoglobulins from the basolateral surface to the apical surface. Most probably controls membrane trafficking through apical recycling endosomes in a post-endocytic step of transcytosis. Required for melanosome transport and release from melanocytes, it also regulates dendrite and dendritic spine development. May also play a role in cell migration. The sequence is that of Ras-related protein Rab-17 from Homo sapiens (Human).